Reading from the N-terminus, the 526-residue chain is Dual specificity tyrosine-phosphorylation-regulated kinase 2 (526 aa).

Composition is skewed to polar residues over residues 30 to 40 (TTQPNGLTTLG) and 60 to 70 (GSSSSLKSTDG). The segment at 30–76 (TTQPNGLTTLGKSGLPVVQDRQSESAHRRQGSSSSLKSTDGTGKVKA) is disordered. At Thr-31 the chain carries Phosphothreonine; by ATM. The short motif at 114–116 (KKR) is the Nuclear localization signal element. The 314-residue stretch at 147 to 460 (YEVLKVIGKG…PSQALRHPWL (314 aa)) folds into the Protein kinase domain. Residues 153–161 (IGKGSFGQV), Lys-176, and 226–229 (FELL) contribute to the ATP site. Catalysis depends on Asp-273, which acts as the Proton acceptor. Tyr-307 carries the phosphotyrosine modification. Ser-367 bears the Phosphoserine; by ATM mark. Residues 462-499 (RRLPKPPTGEKASAKRITESTGAITSISKLPPTSSSAS) are disordered. Positions 480 to 499 (ESTGAITSISKLPPTSSSAS) are enriched in polar residues.

The protein belongs to the protein kinase superfamily. CMGC Ser/Thr protein kinase family. MNB/DYRK subfamily. In terms of assembly, interacts with MDM2. The cofactor is Mg(2+). It depends on Mn(2+) as a cofactor. Phosphorylated on serine/threonine residues. Phosphorylation on Thr-31 and Ser-367 by ATM in response to genotoxic stress disrupts MDM2 binding and prevents MDM2-mediated ubiquitination and subsequent proteasome degradation, thus promoting p53/TP53-mediated apoptosis. In terms of processing, ubiquitination in nucleus by MDM2 in normal conditions leads to proteasome degradation.

It is found in the cytoplasm. Its subcellular location is the nucleus. It catalyses the reaction L-seryl-[protein] + ATP = O-phospho-L-seryl-[protein] + ADP + H(+). The enzyme catalyses L-threonyl-[protein] + ATP = O-phospho-L-threonyl-[protein] + ADP + H(+). The catalysed reaction is L-tyrosyl-[protein] + ATP = O-phospho-L-tyrosyl-[protein] + ADP + H(+). With respect to regulation, autophosphorylates on tyrosine residues. Its function is as follows. Serine/threonine-protein kinase involved in the control of mitotic transition and the regulation of cellular growth and/or development. The sequence is that of Dual specificity tyrosine-phosphorylation-regulated kinase 2 from Gallus gallus (Chicken).